The following is a 312-amino-acid chain: Malate dehydrogenase (312 aa).

NAD(+) contacts are provided by residues G7–G13 and D34. Substrate contacts are provided by R81 and R87. NAD(+) is bound by residues N94 and I117–N119. N119 and R153 together coordinate substrate. Catalysis depends on H177, which acts as the Proton acceptor. An NAD(+)-binding site is contributed by M227.

This sequence belongs to the LDH/MDH superfamily. MDH type 1 family. In terms of assembly, homodimer.

The enzyme catalyses (S)-malate + NAD(+) = oxaloacetate + NADH + H(+). In terms of biological role, catalyzes the reversible oxidation of malate to oxaloacetate. This is Malate dehydrogenase from Escherichia coli O17:K52:H18 (strain UMN026 / ExPEC).